We begin with the raw amino-acid sequence, 339 residues long: Zinc transporter 3 (339 aa).

The signal sequence occupies residues 1–25; the sequence is MKTKNVKLLFFFFSVSLLLIAVVNA. Topologically, residues 26–54 are extracellular; the sequence is AEGHSHGGPKCECSHEDDHENKAGARKYK. The helical transmembrane segment at 55–75 threads the bilayer; that stretch reads IAAIPTVLIAGIIGVLFPLLG. Over 76–86 the chain is Cytoplasmic; it reads KVFPSLRPETC. Residues 87-107 traverse the membrane as a helical segment; that stretch reads FFFVTKAFAAGVILATGFMHV. Topologically, residues 108–123 are extracellular; it reads LPEAYEMLNSPCLTSE. Residues 124 to 144 traverse the membrane as a helical segment; sequence AWEFPFTGFIAMIAAILTLSV. The Cytoplasmic segment spans residues 145–184; sequence DTFATSSFYKSHCKASKRVSDGETGESSVDSEKVQILRTR. Residues 185–205 form a helical membrane-spanning segment; that stretch reads VIAQVLELGIIVHSVVIGISL. Over 206–216 the chain is Extracellular; it reads GASQSPDAAKA. The helical transmembrane segment at 217–237 threads the bilayer; that stretch reads LFIALMFHQCFEGLGLGGCIA. The Cytoplasmic segment spans residues 238-247; that stretch reads QGKFKCLSVT. The helical transmembrane segment at 248–268 threads the bilayer; the sequence is IMSTFFAITTPIGIVVGMGIA. Residues 269–278 are Extracellular-facing; that stretch reads NSYDESSPTA. A helical transmembrane segment spans residues 279-299; that stretch reads LIVQGVLNAASAGILIYMSLV. Residues 300 to 315 lie on the Cytoplasmic side of the membrane; it reads DLLAADFTHPKMQSNT. Residues 316 to 336 form a helical membrane-spanning segment; sequence GLQIMAHIALLLGAGLMSLLA. The Extracellular portion of the chain corresponds to 337–339; it reads KWA.

Belongs to the ZIP transporter (TC 2.A.5) family. As to expression, expressed predominantly in the roots of zinc-deficient plants.

It localises to the cell membrane. Functionally, mediates zinc uptake from the rhizosphere. May also transport other divalent cations. The protein is Zinc transporter 3 (ZIP3) of Arabidopsis thaliana (Mouse-ear cress).